The following is a 506-amino-acid chain: GTPase Der (506 aa).

EngA-type G domains lie at 3–166 (PVVA…GEQL) and 218–391 (IKIA…ACAT). Residues 9 to 16 (GRPNVGKS), 56 to 60 (DTGGI), 118 to 121 (NKTD), 224 to 231 (GRPNVGKS), 271 to 275 (DTAGV), and 336 to 339 (NKWD) each bind GTP. The region spanning 392–476 (QKTSTSMLTR…PIRIQFQEGN (85 aa)) is the KH-like domain.

The protein belongs to the TRAFAC class TrmE-Era-EngA-EngB-Septin-like GTPase superfamily. EngA (Der) GTPase family. As to quaternary structure, associates with the 50S ribosomal subunit.

GTPase that plays an essential role in the late steps of ribosome biogenesis. This Actinobacillus pleuropneumoniae serotype 3 (strain JL03) protein is GTPase Der.